The following is a 338-amino-acid chain: Phenylalanine--tRNA ligase alpha subunit (338 aa).

Residue glutamate 253 participates in Mg(2+) binding.

The protein belongs to the class-II aminoacyl-tRNA synthetase family. Phe-tRNA synthetase alpha subunit type 1 subfamily. Tetramer of two alpha and two beta subunits. It depends on Mg(2+) as a cofactor.

The protein resides in the cytoplasm. The enzyme catalyses tRNA(Phe) + L-phenylalanine + ATP = L-phenylalanyl-tRNA(Phe) + AMP + diphosphate + H(+). The protein is Phenylalanine--tRNA ligase alpha subunit of Geobacter metallireducens (strain ATCC 53774 / DSM 7210 / GS-15).